The following is a 1071-amino-acid chain: Carbamoyl phosphate synthase pyrimidine-specific large chain (1071 aa).

A carboxyphosphate synthetic domain region spans residues 1-401; sequence MPKRVDINKI…SLLKAVRSLE (401 aa). ATP is bound by residues arginine 129, arginine 169, glycine 175, glycine 176, lysine 208, isoleucine 210, glutamate 215, glycine 241, isoleucine 242, histidine 243, glutamine 284, and glutamate 298. The region spanning 133 to 327 is the ATP-grasp 1 domain; that stretch reads RTLMNELNEP…IAKLAAKIAV (195 aa). Positions 284, 298, and 300 each coordinate Mg(2+). Positions 284, 298, and 300 each coordinate Mn(2+). The segment at 402 to 546 is oligomerization domain; it reads ADVYHLELKD…YSTYEEENES (145 aa). The interval 547–929 is carbamoyl phosphate synthetic domain; the sequence is VVTDKKSVMV…ALYKALIASG (383 aa). In terms of domain architecture, ATP-grasp 2 spans 671–861; that stretch reads EQALGELGVP…MANLATKIIL (191 aa). The ATP site is built by arginine 707, arginine 746, leucine 748, glutamate 752, glycine 777, valine 778, histidine 779, serine 780, glutamine 820, and glutamate 832. The Mg(2+) site is built by glutamine 820, glutamate 832, and asparagine 834. Residues glutamine 820, glutamate 832, and asparagine 834 each contribute to the Mn(2+) site. Positions 930 to 1071 constitute an MGS-like domain; sequence IQIPNYGSVL…NTNQEAAVTI (142 aa). The allosteric domain stretch occupies residues 930–1071; it reads IQIPNYGSVL…NTNQEAAVTI (142 aa).

It belongs to the CarB family. In terms of assembly, composed of two chains; the small (or glutamine) chain promotes the hydrolysis of glutamine to ammonia, which is used by the large (or ammonia) chain to synthesize carbamoyl phosphate. Tetramer of heterodimers (alpha,beta)4. Interacts with BrxC. It depends on Mg(2+) as a cofactor. The cofactor is Mn(2+).

The enzyme catalyses hydrogencarbonate + L-glutamine + 2 ATP + H2O = carbamoyl phosphate + L-glutamate + 2 ADP + phosphate + 2 H(+). It carries out the reaction hydrogencarbonate + NH4(+) + 2 ATP = carbamoyl phosphate + 2 ADP + phosphate + 2 H(+). Its pathway is amino-acid biosynthesis; L-arginine biosynthesis; carbamoyl phosphate from bicarbonate: step 1/1. The protein operates within pyrimidine metabolism; UMP biosynthesis via de novo pathway; (S)-dihydroorotate from bicarbonate: step 1/3. In terms of biological role, small subunit of the glutamine-dependent carbamoyl phosphate synthetase (CPSase). CPSase catalyzes the formation of carbamoyl phosphate from the ammonia moiety of glutamine, carbonate, and phosphate donated by ATP, constituting the first step of the biosynthetic pathway leading to pyrimidine nucleotides. The large subunit (synthetase) binds the substrates ammonia (free or transferred from glutamine from the small subunit), hydrogencarbonate and ATP and carries out an ATP-coupled ligase reaction, activating hydrogencarbonate by forming carboxy phosphate which reacts with ammonia to form carbamoyl phosphate. The chain is Carbamoyl phosphate synthase pyrimidine-specific large chain (pyrAB) from Bacillus subtilis (strain 168).